The chain runs to 1030 residues: Beta-galactosidase (1030 aa).

2 residues coordinate substrate: N99 and D197. Residue D197 coordinates Na(+). Mg(2+)-binding residues include E411, H413, and E456. Substrate-binding positions include E456 and 532–535 (EYAH). E456 (proton donor) is an active-site residue. The Nucleophile role is filled by E532. N592 serves as a coordination point for Mg(2+). Na(+) contacts are provided by F596 and N599. 2 residues coordinate substrate: N599 and W1004.

Belongs to the glycosyl hydrolase 2 family. As to quaternary structure, homotetramer. Mg(2+) is required as a cofactor. Na(+) serves as cofactor.

It catalyses the reaction Hydrolysis of terminal non-reducing beta-D-galactose residues in beta-D-galactosides.. The polypeptide is Beta-galactosidase (Photobacterium profundum (strain SS9)).